The chain runs to 414 residues: Nuclear hormone receptor family member nhr-213 (414 aa).

A DNA-binding region (nuclear receptor) is located at residues 21 to 99 (IVLCKVCALS…LGMTPENVQF (79 aa)). 2 consecutive NR C4-type zinc fingers follow at residues 24–44 (CKVC…CRAC) and 62–82 (CKKG…CRLC). Positions 162 to 414 (SAAKKMNSLE…DFSDPDIFDC (253 aa)) constitute an NR LBD domain.

It belongs to the nuclear hormone receptor family.

The protein resides in the nucleus. Orphan nuclear receptor. The sequence is that of Nuclear hormone receptor family member nhr-213 (nhr-213) from Caenorhabditis elegans.